Reading from the N-terminus, the 383-residue chain is Galactokinase (383 aa).

34-37 (EHTD) is a binding site for substrate. 124–130 (GAGLSSS) serves as a coordination point for ATP. Residues Ser-130 and Glu-162 each contribute to the Mg(2+) site. Residue Asp-174 is the Proton acceptor of the active site. Substrate is bound at residue Tyr-223.

This sequence belongs to the GHMP kinase family. GalK subfamily.

The protein localises to the cytoplasm. It catalyses the reaction alpha-D-galactose + ATP = alpha-D-galactose 1-phosphate + ADP + H(+). It participates in carbohydrate metabolism; galactose metabolism. Functionally, catalyzes the transfer of the gamma-phosphate of ATP to D-galactose to form alpha-D-galactose-1-phosphate (Gal-1-P). The polypeptide is Galactokinase (Yersinia pseudotuberculosis serotype IB (strain PB1/+)).